Reading from the N-terminus, the 175-residue chain is Probable S-adenosyl-L-methionine-binding protein VirR (175 aa).

In terms of domain architecture, TsaA-like spans 35-165; that stretch reads LFFVGKIRTP…DRSLSKPLAP (131 aa). S-adenosyl-L-methionine-binding positions include 52 to 54, 90 to 91, Arg114, Thr124, and 145 to 148; these read PRQ, HE, and LDGT.

The protein belongs to the tRNA methyltransferase O family.

This chain is Probable S-adenosyl-L-methionine-binding protein VirR (virR), found in Rhizobium radiobacter (Agrobacterium tumefaciens).